The chain runs to 276 residues: Aquaporin-1 (276 aa).

The Cytoplasmic portion of the chain corresponds to 1–10 (MLDAEQKKNY). A helical transmembrane segment spans residues 11 to 31 (VAGAFGEFVGTAYFLFMGVGG). Over 32–46 (AVNFLNNAAGSPLPG) the chain is Extracellular. The chain crosses the membrane as a helical span at residues 47–67 (FAIPFCFGFSLFVNVFIWAPI). Residues 68 to 93 (SGGVFNPSITIALMATNPKDFPWYRG) are Cytoplasmic-facing. The NPA 1 signature appears at 73-75 (NPS). Residues 94–114 (ILYIVSQFLGALFGSWLIDLI) traverse the membrane as a helical segment. At 115–133 (QPEAPNAATLLADGVSVAQ) the chain is on the extracellular side. A helical membrane pass occupies residues 134–154 (GLFMEMFATSVLTMAVLILAG). Over 155-159 (ERYGK) the chain is Cytoplasmic. Residues 160 to 180 (YLAPFGIGMSLFISALCAGPY) form a helical membrane-spanning segment. Over 181-204 (TGASLNPARTLGPAIVANQYGRAH) the chain is Extracellular. Positions 186-188 (NPA) match the NPA 2 motif. A helical transmembrane segment spans residues 205 to 225 (WIYYVGPTLGSLLAAGYWHIL). The Cytoplasmic segment spans residues 226–276 (RILNIDVVDLKNVLNKCKKCGKEDPRISLKHCEECLKDDPKPEKYDIESQN).

Belongs to the MIP/aquaporin (TC 1.A.8) family.

Its subcellular location is the cell membrane. The enzyme catalyses H2O(in) = H2O(out). With respect to regulation, polyethylene glycol (PEG) stimulates whereas glycerol inhibits the aquaporin activity. Water channel required to facilitate the transport of water across membranes. Stimulates plant drought tolerance by facilitating the transport of water from the arbuscular mycorrhiza fungus to host plants. This Rhizophagus irregularis (Arbuscular mycorrhizal fungus) protein is Aquaporin-1.